Reading from the N-terminus, the 211-residue chain is Large ribosomal subunit protein uL4 (211 aa).

The disordered stretch occupies residues 48–89 (KRAGTASTKTRVEVRGGGAKPWRQKGTGRARAGSRTSPLWRG).

Belongs to the universal ribosomal protein uL4 family. Part of the 50S ribosomal subunit.

One of the primary rRNA binding proteins, this protein initially binds near the 5'-end of the 23S rRNA. It is important during the early stages of 50S assembly. It makes multiple contacts with different domains of the 23S rRNA in the assembled 50S subunit and ribosome. Its function is as follows. Forms part of the polypeptide exit tunnel. This Desulfotalea psychrophila (strain LSv54 / DSM 12343) protein is Large ribosomal subunit protein uL4.